The sequence spans 290 residues: uncharacterized protein (290 aa).

The protein resides in the cell membrane. It localises to the membrane raft. This is an uncharacterized protein from Bacillus subtilis (strain 168).